Consider the following 102-residue polypeptide: ATP-dependent Clp protease adapter protein ClpS (102 aa).

It belongs to the ClpS family. As to quaternary structure, binds to the N-terminal domain of the chaperone ClpA.

Its function is as follows. Involved in the modulation of the specificity of the ClpAP-mediated ATP-dependent protein degradation. The chain is ATP-dependent Clp protease adapter protein ClpS from Shewanella amazonensis (strain ATCC BAA-1098 / SB2B).